Consider the following 91-residue polypeptide: Small ribosomal subunit protein bS18 (91 aa).

It belongs to the bacterial ribosomal protein bS18 family. As to quaternary structure, part of the 30S ribosomal subunit. Forms a tight heterodimer with protein bS6.

In terms of biological role, binds as a heterodimer with protein bS6 to the central domain of the 16S rRNA, where it helps stabilize the platform of the 30S subunit. The protein is Small ribosomal subunit protein bS18 of Burkholderia multivorans (strain ATCC 17616 / 249).